We begin with the raw amino-acid sequence, 574 residues long: Probable E3 ubiquitin-protein ligase ipaH4.5 (574 aa).

The interval 1–284 is interaction with target proteins; the sequence is MKPINNHSFF…YHGPQIYFSM (284 aa). LRR repeat units lie at residues 63 to 82, 83 to 104, 105 to 122, 123 to 143, 144 to 165, 166 to 183, 184 to 205, 206 to 223, 224 to 246, and 247 to 270; these read REPVLNLSLLKLRSLPPLPL, HIRELNISNNELISLPENSPLL, TELHVNGNNLNILPTLPS, QLIKLNISFNRNLSCLPSLPP, YLQSLSARFNSLETLPELPSTL, TILRIEGNRLTVLPELPH, RLQELFVSGNRLQELPEFPQSL, KYLKVGENQLRRLSRLPQ, ELLALDVSNNLLTSLPENIITLP, and ICTNVNISGNPLSTHVLQSLQRLT. The segment at 285–292 is linker; sequence SDGQQNTL. The interval 293 to 574 is E3 ubiquitin-protein ligase catalytic domain; it reads HRPLADAVTA…YRQLTDEVLA (282 aa). The NEL domain occupies 295 to 574; the sequence is PLADAVTAWF…YRQLTDEVLA (280 aa). The Glycyl thioester intermediate role is filled by Cys-379.

This sequence belongs to the LRR-containing bacterial E3 ligase family. Ubiquitinated in the presence of host E1 ubiquitin-activating enzyme, E2 ubiquitin-conjugating enzyme and ubiquitin.

Its subcellular location is the secreted. It localises to the host cytoplasm. The enzyme catalyses S-ubiquitinyl-[E2 ubiquitin-conjugating enzyme]-L-cysteine + [acceptor protein]-L-lysine = [E2 ubiquitin-conjugating enzyme]-L-cysteine + N(6)-ubiquitinyl-[acceptor protein]-L-lysine.. In terms of biological role, effector proteins function to alter host cell physiology and promote bacterial survival in host tissues. This protein is an E3 ubiquitin ligase that interferes with host's ubiquitination pathway. The protein is Probable E3 ubiquitin-protein ligase ipaH4.5 (ipaH4.5) of Shigella flexneri.